A 350-amino-acid chain; its full sequence is Legumin K (350 aa).

2 disordered regions span residues 37–86 (LGGN…GNSV) and 102–170 (EEDT…RKNG). 3 stretches are compositionally biased toward basic and acidic residues: residues 104 to 118 (DTAK…ERSQ), 141 to 150 (EQSHSHSHRE), and 160 to 170 (EKQRSEERKNG). One can recognise a Cupin type-1 domain in the interval 182 to 329 (ENIADAAGAD…AFGLRQRQVT (148 aa)).

Belongs to the 11S seed storage protein (globulins) family. In terms of assembly, hexamer; each subunit is composed of an acidic and a basic chain derived from a single precursor and linked by a disulfide bond.

Its function is as follows. This protein found in the seeds of many leguminous and non-leguminous plants is the source of sulfur-containing amino acids in seed meals. This is Legumin K (LEGK) from Pisum sativum (Garden pea).